The chain runs to 388 residues: Arrestin-C (388 aa).

This sequence belongs to the arrestin family. In terms of assembly, homodimer; disulfide-linked in response to retinal illumination. Interacts with CXCR4; the interaction is dependent on the C-terminal phosphorylation of CXCR4 and modulates the calcium ion mobilization activity of CXCR4. Interacts with GPR84. As to expression, inner and outer segments, and the inner plexiform regions of the retina.

The protein localises to the photoreceptor inner segment. Its subcellular location is the cell projection. It localises to the cilium. The protein resides in the photoreceptor outer segment. Its function is as follows. May play a role in an as yet undefined retina-specific signal transduction. Could bind to photoactivated-phosphorylated red/green opsins. This is Arrestin-C (ARR3) from Homo sapiens (Human).